Here is a 352-residue protein sequence, read N- to C-terminus: ATP synthase subunit a 2 (352 aa).

The first 26 residues, 1-26 (MRKKAISRILALVVPVLLSLNSQAFA), serve as a signal peptide directing secretion. A run of 7 helical transmembrane segments spans residues 112 to 132 (VVMIWLAAILLVVIASAAGAS), 172 to 192 (FLPYLLTVFFFILVCNLLGLI), 195 to 215 (GATATGNINVTLTLSVFTFVI), 232 to 252 (HLTAGTHWALWIIMVPIEILG), 264 to 284 (LFANMTAGHIIILSLFFISFI), 289 to 309 (IVAVAVSIPFAIFIYLLELFV), and 310 to 330 (AFLQAYVFTMLSALFIGLATA).

The protein belongs to the ATPase A chain family. F-type ATPases have 2 components, CF(1) - the catalytic core - and CF(0) - the membrane proton channel. CF(1) has five subunits: alpha(3), beta(3), gamma(1), delta(1), epsilon(1). CF(0) has four main subunits: a, b, b' and c.

It localises to the cell inner membrane. In terms of biological role, key component of the proton channel; it plays a direct role in the translocation of protons across the membrane. This is ATP synthase subunit a 2 from Chlorobaculum tepidum (strain ATCC 49652 / DSM 12025 / NBRC 103806 / TLS) (Chlorobium tepidum).